Here is a 427-residue protein sequence, read N- to C-terminus: 3-phosphoshikimate 1-carboxyvinyltransferase (427 aa).

Lys-22, Ser-23, and Arg-27 together coordinate 3-phosphoshikimate. Phosphoenolpyruvate is bound at residue Lys-22. Residues Gly-96 and Arg-124 each coordinate phosphoenolpyruvate. 3-phosphoshikimate is bound by residues Ser-169, Ser-170, Gln-171, Ser-197, Asp-313, Asn-336, and Lys-340. Phosphoenolpyruvate is bound at residue Gln-171. The Proton acceptor role is filled by Asp-313. Positions 344, 386, and 411 each coordinate phosphoenolpyruvate.

This sequence belongs to the EPSP synthase family. As to quaternary structure, monomer.

Its subcellular location is the cytoplasm. The enzyme catalyses 3-phosphoshikimate + phosphoenolpyruvate = 5-O-(1-carboxyvinyl)-3-phosphoshikimate + phosphate. Its pathway is metabolic intermediate biosynthesis; chorismate biosynthesis; chorismate from D-erythrose 4-phosphate and phosphoenolpyruvate: step 6/7. Catalyzes the transfer of the enolpyruvyl moiety of phosphoenolpyruvate (PEP) to the 5-hydroxyl of shikimate-3-phosphate (S3P) to produce enolpyruvyl shikimate-3-phosphate and inorganic phosphate. This chain is 3-phosphoshikimate 1-carboxyvinyltransferase, found in Escherichia coli (strain SMS-3-5 / SECEC).